Reading from the N-terminus, the 666-residue chain is Putative cysteine-rich receptor-like protein kinase 20 (666 aa).

Residues 1–23 (MSSLICFIFLFLFSFITSFTASA) form the signal peptide. Residues 24-264 (QNPFYLYHNC…PRPGKGGNSS (241 aa)) lie on the Extracellular side of the membrane. 2 Gnk2-homologous domains span residues 27 to 131 (FYLY…NRNI) and 137 to 241 (TDGG…NYEF). 5 N-linked (GlcNAc...) asparagine glycosylation sites follow: Asn-32, Asn-42, Asn-60, Asn-69, and Asn-103. N-linked (GlcNAc...) asparagine glycosylation is present at Asn-262. Residues 265–285 (VIVIAVVVPITVLFLLFVAFF) traverse the membrane as a helical segment. At 286–666 (SVRRAKRKKT…EASITSVAPR (381 aa)) the chain is on the cytoplasmic side. One can recognise a Protein kinase domain in the interval 344–623 (FLPINKLGQG…QMLTTSSIAL (280 aa)). Residues 350–358 (LGQGGFGEV) and Lys-372 contribute to the ATP site. Tyr-417 is modified (phosphotyrosine). Asp-469 (proton acceptor) is an active-site residue. Phosphothreonine is present on Thr-509. The residue at position 517 (Tyr-517) is a Phosphotyrosine.

The protein belongs to the protein kinase superfamily. Ser/Thr protein kinase family. CRK subfamily.

It is found in the membrane. The enzyme catalyses L-seryl-[protein] + ATP = O-phospho-L-seryl-[protein] + ADP + H(+). It catalyses the reaction L-threonyl-[protein] + ATP = O-phospho-L-threonyl-[protein] + ADP + H(+). This Arabidopsis thaliana (Mouse-ear cress) protein is Putative cysteine-rich receptor-like protein kinase 20 (CRK20).